The sequence spans 280 residues: UDP-3-O-acyl-N-acetylglucosamine deacetylase (280 aa).

Residues His-77, His-238, and Asp-242 each contribute to the Zn(2+) site. His-265 acts as the Proton donor in catalysis.

This sequence belongs to the LpxC family. Zn(2+) serves as cofactor.

It catalyses the reaction a UDP-3-O-[(3R)-3-hydroxyacyl]-N-acetyl-alpha-D-glucosamine + H2O = a UDP-3-O-[(3R)-3-hydroxyacyl]-alpha-D-glucosamine + acetate. Its pathway is glycolipid biosynthesis; lipid IV(A) biosynthesis; lipid IV(A) from (3R)-3-hydroxytetradecanoyl-[acyl-carrier-protein] and UDP-N-acetyl-alpha-D-glucosamine: step 2/6. Functionally, catalyzes the hydrolysis of UDP-3-O-myristoyl-N-acetylglucosamine to form UDP-3-O-myristoylglucosamine and acetate, the committed step in lipid A biosynthesis. The polypeptide is UDP-3-O-acyl-N-acetylglucosamine deacetylase (Nostoc sp. (strain PCC 7120 / SAG 25.82 / UTEX 2576)).